The primary structure comprises 107 residues: Iron-binding protein IscA (107 aa).

3 residues coordinate Fe cation: Cys35, Cys99, and Cys101.

It belongs to the HesB/IscA family. In terms of assembly, homodimer; may form tetramers and higher multimers. It depends on Fe cation as a cofactor.

Its function is as follows. Is able to transfer iron-sulfur clusters to apo-ferredoxin. Multiple cycles of [2Fe2S] cluster formation and transfer are observed, suggesting that IscA acts catalytically. Recruits intracellular free iron so as to provide iron for the assembly of transient iron-sulfur cluster in IscU in the presence of IscS, L-cysteine and the thioredoxin reductase system TrxA/TrxB. The protein is Iron-binding protein IscA of Yersinia enterocolitica serotype O:8 / biotype 1B (strain NCTC 13174 / 8081).